Reading from the N-terminus, the 520-residue chain is GMP synthase [glutamine-hydrolyzing] (520 aa).

A Glutamine amidotransferase type-1 domain is found at K12–D205. Catalysis depends on C89, which acts as the Nucleophile. Active-site residues include H179 and E181. The 190-residue stretch at W206–R395 folds into the GMPS ATP-PPase domain. S233–S239 contributes to the ATP binding site.

Homodimer.

The enzyme catalyses XMP + L-glutamine + ATP + H2O = GMP + L-glutamate + AMP + diphosphate + 2 H(+). It functions in the pathway purine metabolism; GMP biosynthesis; GMP from XMP (L-Gln route): step 1/1. Functionally, catalyzes the synthesis of GMP from XMP. In Streptococcus pyogenes serotype M1, this protein is GMP synthase [glutamine-hydrolyzing].